The primary structure comprises 126 residues: Fluoride-specific ion channel FluC (126 aa).

Helical transmembrane passes span 4–24 (LLLV…TSAW), 36–56 (GTLL…TASL), 67–85 (LFLA…SFNY), and 101–121 (AYLL…TLLV). Na(+)-binding residues include Gly75 and Thr78.

Belongs to the fluoride channel Fluc/FEX (TC 1.A.43) family.

It is found in the cell inner membrane. It catalyses the reaction fluoride(in) = fluoride(out). Its activity is regulated as follows. Na(+) is not transported, but it plays an essential structural role and its presence is essential for fluoride channel function. In terms of biological role, fluoride-specific ion channel. Important for reducing fluoride concentration in the cell, thus reducing its toxicity. The sequence is that of Fluoride-specific ion channel FluC from Anaeromyxobacter dehalogenans (strain 2CP-1 / ATCC BAA-258).